The chain runs to 859 residues: Cadherin-related family member 1 (859 aa).

A signal peptide spans 1 to 21; the sequence is MRRGPQVALVLGLLCIYLAQA. Residues 22-701 lie on the Extracellular side of the membrane; sequence NFAPHFFDNG…LIQTKDNPMK (680 aa). Cadherin domains follow at residues 36–135, 136–247, 248–354, 360–473, 474–577, and 569–691; these read NGNM…APRF, LQEP…APIF, VGTP…PPTF, PQNK…VPKF, TSHY…YPQF, and DVND…MAAF. Asn58 and Asn89 each carry an N-linked (GlcNAc...) asparagine glycan. N-linked (GlcNAc...) asparagine glycans are attached at residues Asn288 and Asn297. A helical membrane pass occupies residues 702–722; sequence AVGVLAGVMAIVVAITVLIST. The Cytoplasmic portion of the chain corresponds to 723–859; the sequence is ATFWRNKKSN…KKSLGNKAYV (137 aa). The interval 789-859 is disordered; the sequence is PPRAPALPPP…KKSLGNKAYV (71 aa). Positions 790–800 are enriched in pro residues; that stretch reads PRAPALPPPPK. Polar residues predominate over residues 802 to 816; the sequence is ASSTVAQQTVPTVSG. Residues 817 to 827 show a composition bias toward low complexity; that stretch reads SLTPQPSQQLP.

In terms of assembly, interacts with PROM1. In terms of processing, undergoes proteolytic cleavage; produces a soluble 95 kDa N-terminal fragment and a 25 kDa cell-associated C-terminal fragment. Expressed in the retina. Strongly expressed by the mitral and tufted cells in the main and accessory olfactory bulbs. Also expressed in the septum and olfactory cortex. Weakly expressed in the triangular septal nucleus and piriform cortex.

Its subcellular location is the cell membrane. Potential calcium-dependent cell-adhesion protein. May be required for the structural integrity of the outer segment (OS) of photoreceptor cells. The polypeptide is Cadherin-related family member 1 (Cdhr1) (Rattus norvegicus (Rat)).